The following is a 310-amino-acid chain: Ribosomal protein uL3 glutamine methyltransferase (310 aa).

This sequence belongs to the protein N5-glutamine methyltransferase family. PrmB subfamily.

The catalysed reaction is L-glutaminyl-[ribosomal protein uL3] + S-adenosyl-L-methionine = N(5)-methyl-L-glutaminyl-[ribosomal protein uL3] + S-adenosyl-L-homocysteine + H(+). In terms of biological role, methylates large ribosomal subunit protein uL3 on a specific glutamine residue. The chain is Ribosomal protein uL3 glutamine methyltransferase from Aliivibrio fischeri (strain ATCC 700601 / ES114) (Vibrio fischeri).